The primary structure comprises 399 residues: Lipoyl synthase, mitochondrial (399 aa).

A mitochondrion-targeting transit peptide spans 1–14 (MALISRSCGAASRY). Residues 39 to 52 (AASTSSSSSPSPST) are compositionally biased toward low complexity. The interval 39–60 (AASTSSSSSPSPSTHNDRKKDL) is disordered. Residues cysteine 128, cysteine 133, cysteine 139, cysteine 159, cysteine 163, cysteine 166, and serine 374 each contribute to the [4Fe-4S] cluster site. The 220-residue stretch at 144–363 (EYATATATIM…EKVGQEMGFI (220 aa)) folds into the Radical SAM core domain.

It belongs to the radical SAM superfamily. Lipoyl synthase family. Requires [4Fe-4S] cluster as cofactor.

Its subcellular location is the mitochondrion. The enzyme catalyses [[Fe-S] cluster scaffold protein carrying a second [4Fe-4S](2+) cluster] + N(6)-octanoyl-L-lysyl-[protein] + 2 oxidized [2Fe-2S]-[ferredoxin] + 2 S-adenosyl-L-methionine + 4 H(+) = [[Fe-S] cluster scaffold protein] + N(6)-[(R)-dihydrolipoyl]-L-lysyl-[protein] + 4 Fe(3+) + 2 hydrogen sulfide + 2 5'-deoxyadenosine + 2 L-methionine + 2 reduced [2Fe-2S]-[ferredoxin]. It functions in the pathway protein modification; protein lipoylation via endogenous pathway; protein N(6)-(lipoyl)lysine from octanoyl-[acyl-carrier-protein]: step 2/2. In terms of biological role, catalyzes the radical-mediated insertion of two sulfur atoms into the C-6 and C-8 positions of the octanoyl moiety bound to the lipoyl domains of lipoate-dependent enzymes, thereby converting the octanoylated domains into lipoylated derivatives. This chain is Lipoyl synthase, mitochondrial (lias), found in Danio rerio (Zebrafish).